We begin with the raw amino-acid sequence, 827 residues long: Periplasmic nitrate reductase (827 aa).

The tat-type signal signal peptide spans 1 to 34 (MSLTRRDFIKANAVPATAAAAGLATPAIAQPAKA). One can recognise a 4Fe-4S Mo/W bis-MGD-type domain in the interval 36–92 (IRWDKGVCRFCGTGCSVLVGVQDGRVVATQGDPDSPVNRGLNCIKGYFLSKIMYGED). The [4Fe-4S] cluster site is built by cysteine 43, cysteine 46, cysteine 50, and cysteine 78. Mo-bis(molybdopterin guanine dinucleotide) contacts are provided by residues lysine 80, glutamine 148, asparagine 173, cysteine 177, 210–217 (WGSNMAEM), 241–245 (STFEH), 260–262 (QTD), methionine 371, glutamine 375, asparagine 481, 507–508 (SD), lysine 530, aspartate 557, and 717–726 (TGRVLEHWHS). Phenylalanine 793 is a substrate binding site. Asparagine 801 and lysine 818 together coordinate Mo-bis(molybdopterin guanine dinucleotide).

The protein belongs to the prokaryotic molybdopterin-containing oxidoreductase family. NasA/NapA/NarB subfamily. Component of the periplasmic nitrate reductase NapAB complex composed of NapA and NapB. Requires [4Fe-4S] cluster as cofactor. Mo-bis(molybdopterin guanine dinucleotide) is required as a cofactor. In terms of processing, predicted to be exported by the Tat system. The position of the signal peptide cleavage has not been experimentally proven.

The protein resides in the periplasm. It catalyses the reaction 2 Fe(II)-[cytochrome] + nitrate + 2 H(+) = 2 Fe(III)-[cytochrome] + nitrite + H2O. Catalytic subunit of the periplasmic nitrate reductase complex NapAB. Receives electrons from NapB and catalyzes the reduction of nitrate to nitrite. In Paramagnetospirillum magnetotacticum (Aquaspirillum magnetotacticum), this protein is Periplasmic nitrate reductase.